Reading from the N-terminus, the 403-residue chain is Zinc metalloproteinase nas-8 (403 aa).

Positions 1–29 (MRRNDLLNNKITIFLSSLSLFVIIIPIYA) are cleaved as a signal peptide. Positions 30-111 (AEKDLLPPST…DPKNSESLRR (82 aa)) are excised as a propeptide. The 196-residue stretch at 112 to 307 (NGVITGTRKW…LKMNLMYQCS (196 aa)) folds into the Peptidase M12A domain. 5 cysteine pairs are disulfide-bonded: Cys154/Cys306, Cys176/Cys195, Cys338/Cys372, Cys345/Cys365, and Cys352/Cys369. His203 contacts Zn(2+). Glu204 is a catalytic residue. 2 residues coordinate Zn(2+): His207 and His213. One can recognise a ShKT domain in the interval 338 to 372 (CRDRTNLCWRWIDRCKSFFFEQIMKEFCSLSCGYC). Residue Asn386 is glycosylated (N-linked (GlcNAc...) asparagine).

The cofactor is Zn(2+).

The protein localises to the secreted. The enzyme catalyses Hydrolysis of peptide bonds in substrates containing five or more amino acids, preferentially with Ala in P1', and Pro in P2'.. Metalloprotease. In Caenorhabditis elegans, this protein is Zinc metalloproteinase nas-8 (nas-8).